Here is a 341-residue protein sequence, read N- to C-terminus: UDP-3-O-acylglucosamine N-acyltransferase (341 aa).

His239 acts as the Proton acceptor in catalysis.

This sequence belongs to the transferase hexapeptide repeat family. LpxD subfamily. Homotrimer.

It carries out the reaction a UDP-3-O-[(3R)-3-hydroxyacyl]-alpha-D-glucosamine + a (3R)-hydroxyacyl-[ACP] = a UDP-2-N,3-O-bis[(3R)-3-hydroxyacyl]-alpha-D-glucosamine + holo-[ACP] + H(+). It functions in the pathway bacterial outer membrane biogenesis; LPS lipid A biosynthesis. Its function is as follows. Catalyzes the N-acylation of UDP-3-O-acylglucosamine using 3-hydroxyacyl-ACP as the acyl donor. Is involved in the biosynthesis of lipid A, a phosphorylated glycolipid that anchors the lipopolysaccharide to the outer membrane of the cell. In Shewanella sp. (strain MR-7), this protein is UDP-3-O-acylglucosamine N-acyltransferase.